Consider the following 139-residue polypeptide: Large ribosomal subunit protein bL21 (139 aa).

It belongs to the bacterial ribosomal protein bL21 family. As to quaternary structure, part of the 50S ribosomal subunit. Contacts protein L20.

In terms of biological role, this protein binds to 23S rRNA in the presence of protein L20. This Prochlorococcus marinus (strain NATL1A) protein is Large ribosomal subunit protein bL21.